Reading from the N-terminus, the 208-residue chain is N-(5'-phosphoribosyl)anthranilate isomerase (208 aa).

This sequence belongs to the TrpF family.

The enzyme catalyses N-(5-phospho-beta-D-ribosyl)anthranilate = 1-(2-carboxyphenylamino)-1-deoxy-D-ribulose 5-phosphate. It functions in the pathway amino-acid biosynthesis; L-tryptophan biosynthesis; L-tryptophan from chorismate: step 3/5. This chain is N-(5'-phosphoribosyl)anthranilate isomerase, found in Neisseria meningitidis serogroup C / serotype 2a (strain ATCC 700532 / DSM 15464 / FAM18).